We begin with the raw amino-acid sequence, 184 residues long: dCTP deaminase (184 aa).

Residues 97 to 102 (RSTFAR) and D113 contribute to the dCTP site. Residue E123 is the Proton donor/acceptor of the active site. DCTP contacts are provided by Y155 and Q162.

The protein belongs to the dCTP deaminase family. As to quaternary structure, homotrimer.

It carries out the reaction dCTP + H2O + H(+) = dUTP + NH4(+). It participates in pyrimidine metabolism; dUMP biosynthesis; dUMP from dCTP (dUTP route): step 1/2. In terms of biological role, catalyzes the deamination of dCTP to dUTP. This chain is dCTP deaminase, found in Saccharolobus solfataricus (strain ATCC 35092 / DSM 1617 / JCM 11322 / P2) (Sulfolobus solfataricus).